The sequence spans 190 residues: Ribosome maturation factor RimM (190 aa).

Residues 95-171 (DPDEFYDHEL…VVMIEPPEGL (77 aa)) form the PRC barrel domain. Residues 169–190 (EGLLDPDFGDKSNSDNSNSDND) form a disordered region.

It belongs to the RimM family. In terms of assembly, binds ribosomal protein uS19.

It is found in the cytoplasm. In terms of biological role, an accessory protein needed during the final step in the assembly of 30S ribosomal subunit, possibly for assembly of the head region. Essential for efficient processing of 16S rRNA. May be needed both before and after RbfA during the maturation of 16S rRNA. It has affinity for free ribosomal 30S subunits but not for 70S ribosomes. This Rhodococcus erythropolis (strain PR4 / NBRC 100887) protein is Ribosome maturation factor RimM.